A 92-amino-acid chain; its full sequence is Acylphosphatase (92 aa).

The Acylphosphatase-like domain maps to 5 to 92 (ATAAYVYGVV…TDYKGFTIRY (88 aa)). Residues arginine 20 and asparagine 38 contribute to the active site.

This sequence belongs to the acylphosphatase family.

The catalysed reaction is an acyl phosphate + H2O = a carboxylate + phosphate + H(+). The sequence is that of Acylphosphatase (acyP) from Pectobacterium atrosepticum (strain SCRI 1043 / ATCC BAA-672) (Erwinia carotovora subsp. atroseptica).